Reading from the N-terminus, the 889-residue chain is Putative receptor-like protein kinase At3g46340 (889 aa).

Positions 1–25 (MEFPHSVLLVVLIIATFAISNLVQA) are cleaved as a signal peptide. The Extracellular portion of the chain corresponds to 26-514 (EEDQEGFISL…VITKKKFPVM (489 aa)). N-linked (GlcNAc...) asparagine glycosylation is found at N185, N239, N259, N292, N316, N342, N366, N419, N435, N448, N467, and N474. LRR repeat units follow at residues 414–437 (RITSLNLSSTGLTGNIAAGIQNLT), 438–460 (HLDKLDLSNNNLTGGVPEFLASM), and 462–483 (SLSFINLSKNNLNGSIPQALLK). The chain crosses the membrane as a helical span at residues 515–535 (IVALVSSAVVVILVVLVLIFV). Residues 536–889 (FKKKKPSNLE…FDTKAVPSAR (354 aa)) are Cytoplasmic-facing. Residues 544 to 566 (LEDLPPSSNTPRENITSTSISDT) form a disordered region. A Protein kinase domain is found at 585 to 874 (KNLQRPLGEG…TQGMDSHSSF (290 aa)). Residues 591-599 (LGEGGFGVV) and K614 contribute to the ATP site. Y659 carries the phosphotyrosine modification. D711 serves as the catalytic Proton acceptor. S745 is subject to Phosphoserine. A phosphothreonine mark is found at T746 and T751. Y759 bears the Phosphotyrosine mark. The tract at residues 863 to 889 (NKTQGMDSHSSFEQSMSFDTKAVPSAR) is disordered. Positions 864–880 (KTQGMDSHSSFEQSMSF) are enriched in polar residues.

Belongs to the protein kinase superfamily. Ser/Thr protein kinase family.

The protein resides in the cell membrane. It carries out the reaction L-seryl-[protein] + ATP = O-phospho-L-seryl-[protein] + ADP + H(+). The catalysed reaction is L-threonyl-[protein] + ATP = O-phospho-L-threonyl-[protein] + ADP + H(+). In Arabidopsis thaliana (Mouse-ear cress), this protein is Putative receptor-like protein kinase At3g46340.